A 37-amino-acid chain; its full sequence is Gene product 16.5 (37 aa).

It belongs to the phi29likevirus gp16.5 family.

The protein is Gene product 16.5 (16.5) of Bacillus phage phi29 (Bacteriophage phi-29).